The following is a 401-amino-acid chain: UDP-GlcNAc:betaGal beta-1,3-N-acetylglucosaminyltransferase 9 (401 aa).

The Cytoplasmic segment spans residues 1 to 10 (MRRRLRLRRE). Residues 11–31 (ALLTLLLGATLGLLLYAQQEG) traverse the membrane as a helical; Signal-anchor for type II membrane protein segment. The Lumenal segment spans residues 32-401 (AAPTTSAPRA…VPAGPFQWGP (370 aa)). Residues 33–85 (APTTSAPRAQGRAAPGPTPGLRVFQAPDTGAAPPAYEGDTPEPPTPTGPFDFG) form a disordered region. Positions 38–47 (APRAQGRAAP) are enriched in low complexity.

The protein belongs to the glycosyltransferase 31 family.

It localises to the golgi apparatus membrane. This is UDP-GlcNAc:betaGal beta-1,3-N-acetylglucosaminyltransferase 9 from Bos taurus (Bovine).